The chain runs to 721 residues: Exo beta-1,2-glucooligosaccharide sophorohydrolase (non-reducing end) (721 aa).

The signal sequence occupies residues 1–18 (MKHIALLTTLLLSASLQA). The Glycoamylase-like domain maps to 474 to 708 (NHKLIGWNET…LLWNLFMSHP (235 aa)).

In terms of assembly, monomer.

The protein resides in the periplasm. The catalysed reaction is [(1-&gt;2)-beta-D-glucosyl](n) + H2O = [(1-&gt;2)-beta-D-glucosyl](n-2) + sophorose. Catalyzes the hydrolysis of linear beta-1,2-glucan and beta-1,2-glucooligosaccharides with degrees of polymerization (DPs) greater than or equal to 4, to produce sophorose. The best substrates are tetra- and pentasaccharides. Acts as an exo-type enzyme that releases sophorose from the non-reducing end of the substrate. It cannot hydrolyze cyclic beta-1,2-glucans. In Parabacteroides distasonis (strain ATCC 8503 / DSM 20701 / CIP 104284 / JCM 5825 / NCTC 11152), this protein is Exo beta-1,2-glucooligosaccharide sophorohydrolase (non-reducing end).